We begin with the raw amino-acid sequence, 415 residues long: Gamma-glutamyl phosphate reductase (415 aa).

It belongs to the gamma-glutamyl phosphate reductase family.

It localises to the cytoplasm. It catalyses the reaction L-glutamate 5-semialdehyde + phosphate + NADP(+) = L-glutamyl 5-phosphate + NADPH + H(+). The protein operates within amino-acid biosynthesis; L-proline biosynthesis; L-glutamate 5-semialdehyde from L-glutamate: step 2/2. In terms of biological role, catalyzes the NADPH-dependent reduction of L-glutamate 5-phosphate into L-glutamate 5-semialdehyde and phosphate. The product spontaneously undergoes cyclization to form 1-pyrroline-5-carboxylate. The protein is Gamma-glutamyl phosphate reductase of Bacillus cereus (strain AH187).